A 192-amino-acid chain; its full sequence is Small ribosomal subunit protein uS4c-2 (192 aa).

The 65-residue stretch at 91-155 (TRLDHLVYRA…PKPPEYLPPY (65 aa)) folds into the S4 RNA-binding domain.

This sequence belongs to the universal ribosomal protein uS4 family. In terms of assembly, part of the 30S ribosomal subunit. Contacts protein S5. The interaction surface between S4 and S5 is involved in control of translational fidelity.

Its subcellular location is the plastid. The protein resides in the chloroplast. In terms of biological role, one of the primary rRNA binding proteins, it binds directly to 16S rRNA where it nucleates assembly of the body of the 30S subunit. Its function is as follows. With S5 and S12 plays an important role in translational accuracy. The protein is Small ribosomal subunit protein uS4c-2 of Cyanidium caldarium (Red alga).